A 316-amino-acid polypeptide reads, in one-letter code: Apolipoprotein E (316 aa).

Residues 1 to 18 (MKVLWVALVVALLAGCQA) form the signal peptide. 8 consecutive repeat copies span residues 79–100 (VLMEETMKEVKAYREELEGQLA), 101–122 (PMAQETQARVSKELQAAQARLG), 123–144 (SDMEDLRNRLAQYRSEVQAMLG), 145–166 (QSTEELRARMASHLRKLRKRLL), 167–188 (RDADDLKKRLAVYQAGASEGAE), 189–210 (RSVSAIRERLRPLVEQGQSRAA), 211–232 (TLSTQAAQPLLDRAEAWRQKLH), and 233–254 (GRLEEVGVRAQDRLDKMRQQLE). An 8 X 22 AA approximate tandem repeats region spans residues 79-254 (VLMEETMKEV…RLDKMRQQLE (176 aa)). The residue at position 142 (Met142) is a Methionine sulfoxide. Position 146 is a phosphoserine (Ser146). The tract at residues 157 to 167 (HLRKLRKRLLR) is LDL and other lipoprotein receptors binding. 161–164 (LRKR) serves as a coordination point for heparin. The lipid-binding and lipoprotein association stretch occupies residues 209–289 (AATLSTQAAQ…SWFEPLVGDM (81 aa)). O-linked (GalNAc...) threonine glycosylation is present at Thr211. Position 228–235 (228–235 (RQKLHGRL)) interacts with heparin. The interval 265 to 316 (SQIRLQAEAFQARLRSWFEPLVGDMQRQWAGLVEKVQLALHLSPTSPPSENH) is homooligomerization. Residues 277–289 (RLRSWFEPLVGDM) form a specificity for association with VLDL region.

Belongs to the apolipoprotein A1/A4/E family. As to quaternary structure, homotetramer. May interact with ABCA1; functionally associated with ABCA1 in the biogenesis of HDLs. May interact with APP/A4 amyloid-beta peptide; the interaction is extremely stable in vitro but its physiological significance is unclear. May interact with MAPT. May interact with MAP2. In the cerebrospinal fluid, interacts with secreted SORL1. Interacts with PMEL; this allows the loading of PMEL luminal fragment on ILVs to induce fibril nucleation. Post-translationally, APOE exists as multiple glycosylated and sialylated glycoforms within cells and in plasma. The extent of glycosylation and sialylation are tissue and context specific. Glycated in plasma VLDL. In terms of processing, phosphorylated by FAM20C in the extracellular medium.

The protein resides in the secreted. It localises to the extracellular space. The protein localises to the extracellular matrix. Its subcellular location is the extracellular vesicle. It is found in the endosome. The protein resides in the multivesicular body. In terms of biological role, APOE is an apolipoprotein, a protein associating with lipid particles, that mainly functions in lipoprotein-mediated lipid transport between organs via the plasma and interstitial fluids. APOE is a core component of plasma lipoproteins and is involved in their production, conversion and clearance. Apolipoproteins are amphipathic molecules that interact both with lipids of the lipoprotein particle core and the aqueous environment of the plasma. As such, APOE associates with chylomicrons, chylomicron remnants, very low density lipoproteins (VLDL) and intermediate density lipoproteins (IDL) but shows a preferential binding to high-density lipoproteins (HDL). It also binds a wide range of cellular receptors including the LDL receptor/LDLR and the very low-density lipoprotein receptor/VLDLR that mediate the cellular uptake of the APOE-containing lipoprotein particles. Finally, APOE also has a heparin-binding activity and binds heparan-sulfate proteoglycans on the surface of cells, a property that supports the capture and the receptor-mediated uptake of APOE-containing lipoproteins by cells. This is Apolipoprotein E (APOE) from Capra hircus aegagrus (Wild goat).